The primary structure comprises 1074 residues: MELPDSPPPLDAPSPPHFLDAPQDRWNVFYPAVQTLVNALGGYEEVESPPDSGIFETVYRPGDSVLGVLKDLKKLWRKDDEDDERTVARCMYRAELMKELVAIVVECAERGEWGRKVALVACDLIAALTWPIDVAQELKEIEDEGPVVTDYASLLRAQLEYKALFLKTTKPLKSILSLMVPCLAKPRKDEKDSRIISLGLHVVRNLLAIKDAVAEGTATGEKEEFAHLQSDLITQLDSLTYLQLFLTLASCADKTDLNPFNVIVLDILHLIFRGIKPSELVQDQKRVPIDSLARLLEKEKKQKALNSRVGSTRHSRFGTTITVKTAEQRVVLHRQTAIIENPGKILDMTKRKKAVVAKRMDDLTVFVNLSSDAMVILQSFSKSFLEICYNTFIESILRDIRMERTKIRPSDNIRVFYLSSFFIEYLLLLRHKLLEKGGSRRLEELPLGLVAQIAEMDSVKWLFARLRICWDDKPKAWTELQACIECFTQILLLIDDMSTSTNEEDVEVAEILQHQLYYNYDILDSALAVVREYKNQSIAYLDSIIHFAYVLLRMLEKYSKTKAFMFIRKRKNTHKKRKERQAASQANADREQRKIPEEYGDEGEEAFAPDEDAPSYAEHAFTFQSFEKRFAQEAVVNTLLTYLERFLEFDGPEPMKRVVGLMHRQVIKAHAEGLYFKVSTLIIFRRILDKQHVLPAAPSSRDLITLITYILRKFFKHVEKEPFTLVEALSSKSRGKWKTVGGGSDDDDDEMAGQRGRIKEKMGPVELQFIKKHKFSWSQQMSIAFAIIWGDGHGYLIKWIVEVLEQVLAAKQEIVLTTDGGINGDEDEEDEDGNARVRRFGRPSDEAISKFTQFDLQPEESEQITAVTSNPHFRLMLKLLSFDLPPPPMELDFEEDVSSEELALAREKSDSAWFLPANVLPSDIEASIGALKQYMEEPPTLDDDPKKLLRRKARATRRRRRSPSVESYDSETGEVRPGHQHKKNPRQKRAKKAVETQNYKSAAFIEDSDDEDPEATRRFFENEERLRREMDELAAQGGHPMMERGVKRKRGKKNGKGAISDTPPPSQRGNDRET.

2 disordered regions span residues Asn-572–Ile-595 and Glu-936–Thr-1074. Basic residues-rich tracts occupy residues Leu-948–Ser-962 and Gly-978–Lys-991. Over residues Glu-1014–Asp-1031 the composition is skewed to basic and acidic residues. The segment covering Val-1046–Gly-1055 has biased composition (basic residues).

This sequence belongs to the timeless family.

The protein localises to the nucleus. Functionally, involved in chromosome segregation during meiosis and DNA damage repair. This is Topoisomerase 1-associated factor 1 (TOF1) from Cryptococcus neoformans var. neoformans serotype D (strain JEC21 / ATCC MYA-565) (Filobasidiella neoformans).